A 440-amino-acid polypeptide reads, in one-letter code: tRNA(Ile)-lysidine synthase (440 aa).

19 to 24 (SGGLDS) is a binding site for ATP.

It belongs to the tRNA(Ile)-lysidine synthase family.

It is found in the cytoplasm. The catalysed reaction is cytidine(34) in tRNA(Ile2) + L-lysine + ATP = lysidine(34) in tRNA(Ile2) + AMP + diphosphate + H(+). In terms of biological role, ligates lysine onto the cytidine present at position 34 of the AUA codon-specific tRNA(Ile) that contains the anticodon CAU, in an ATP-dependent manner. Cytidine is converted to lysidine, thus changing the amino acid specificity of the tRNA from methionine to isoleucine. The polypeptide is tRNA(Ile)-lysidine synthase (Buchnera aphidicola subsp. Acyrthosiphon pisum (strain APS) (Acyrthosiphon pisum symbiotic bacterium)).